The chain runs to 522 residues: F-box only protein 7 (522 aa).

A ubiquitin-like region spans residues 1-87 (MKLRVRLQKR…EDAIAAPNLP (87 aa)). Residues 88-132 (SSTVSEHSSVQNNDQPSLATSSSQSNIQDAQLHDSLQGQATQSEV) are compositionally biased toward polar residues. The segment at 88–151 (SSTVSEHSSV…GQHFEAEAVP (64 aa)) is disordered. The tract at residues 91–128 (VSEHSSVQNNDQPSLATSSSQSNIQDAQLHDSLQGQAT) is important for interaction with PINK1. Residues 128–168 (TQSEVWNDDSVSGPGQHFEAEAVPDVVDVEEGTGYYLAEPM) are important for interaction with CDK6. Positions 179 to 323 (PHSLEILYQS…PLLAFTRQAL (145 aa)) are important for dimerization and interaction with PSMF1. An F-box domain is found at 328–374 (VFGLVVLPLELKLRIFRLLDVRSVLSLSAVCRDLCITSNDQLLWRCL). Residues 380–522 (RDGSIRGRDT…WPTDSRLPFM (143 aa)) form an important for interaction with CDK6 region. Omega-N-methylarginine occurs at positions 431 and 451. The RFDP motif signature appears at 481–484 (RFDP). The tract at residues 484–522 (PVGPLPGPNPILPGRGGPSDRFPLRPSRGWPTDSRLPFM) is disordered. The residue at position 518 (R518) is an Asymmetric dimethylarginine.

In terms of assembly, part of the SCF (SKP1-CUL1-F-box) E3 ubiquitin-protein ligase complex SCF(FBXO7) formed of CUL1, SKP1, RBX1 and FBXO7. Interacts via its C-terminal proline-rich region with DLGAP5. Interacts with BIRC2. Interacts with CDK6 and promotes its interaction with D-type cyclin. Interacts (via the N-terminal Ubl domain) with PRKN. Interacts (via N-terminal region) with PINK1. Interacts with PSMF1.

Its subcellular location is the cytoplasm. The protein resides in the nucleus. The protein localises to the mitochondrion. It localises to the cytosol. The protein operates within protein modification; protein ubiquitination. In terms of biological role, substrate recognition component of a SCF (SKP1-CUL1-F-box protein) E3 ubiquitin-protein ligase complex which mediates the ubiquitination and subsequent proteasomal degradation of target proteins and plays a role in several biological processes such as cell cycle, cell proliferation, or maintenance of chromosome stability. Recognizes and ubiquitinates BIRC2 and the cell cycle regulator DLGAP5. Plays a role downstream of PINK1 in the clearance of damaged mitochondria via selective autophagy (mitophagy) by targeting PRKN to dysfunctional depolarized mitochondria. Promotes MFN1 ubiquitination. Mediates the ubiquitination and proteasomal degradation of UXT isoform 2, thereby impairing the NF-kappa-B signaling pathway. Inhibits NF-kappa-B pathway also by promoting the ubiquitinatioin of TRAF2. Affects the assembly state and activity of the proteasome in the cells including neurons by ubiquitinating the proteasomal subunit PSMA2 via 'Lys-63'-linked polyubiquitin chains. Promotes 'Lys-48'-linked polyubiquitination SIRT7, leading to the hydrogen peroxide-induced cell death. This chain is F-box only protein 7 (FBXO7), found in Bos taurus (Bovine).